Consider the following 274-residue polypeptide: Orotidine 5'-phosphate decarboxylase (274 aa).

Lysine 95 serves as the catalytic Proton donor.

Belongs to the OMP decarboxylase family. Type 2 subfamily.

The catalysed reaction is orotidine 5'-phosphate + H(+) = UMP + CO2. It participates in pyrimidine metabolism; UMP biosynthesis via de novo pathway; UMP from orotate: step 2/2. This chain is Orotidine 5'-phosphate decarboxylase (pyrF), found in Mycobacterium bovis (strain ATCC BAA-935 / AF2122/97).